Consider the following 1165-residue polypeptide: MEINNQNQCVPYNCLSNPKEIILGEERLETGNTVADISLGLINFLYSNFVPGGGFIVGLLELIWGFIGPSQWDIFLAQIEQLISQRIEEFARNQAISRLEGLSNLYKVYVRAFSDWEKDPTNPALREEMRIQFNDMNSALITAIPLFRVQNYEVALLSVYVQAANLHLSILRDVSVFGERWGYDTATINNRYSDLTSLIHVYTNHCVDTYNQGLRRLEGRFLSDWIVYNRFRRQLTISVLDIVAFFPNYDIRTYPIQTATQLTREVYLDLPFINENLSPAASYPTFSAAESAIIRSPHLVDFLNSFTIYTDSLARYAYWGGHLVNSFRTGTTTNLIRSPLYGREGNTERPVTITASPSVPIFRTLSYITGLDNSNPVAGIEGVEFQNTISRSIYRKSGPIDSFSELPPQDASVSPAIGYSHRLCHATFLERISGPRIAGTVFSWTHRSASPTNEVSPSRITQIPWVKAHTLASGASVIKGPGFTGGDILTRNSMGELGTLRVTFTGRLPQSYYIRFRYASVANRSGTFRYSQPPSYGISFPKTMDAGEPLTSRSFAHTTLFTPITFSRAQEEFDLYIQSGVYIDRIEFIPVTATFEAEYDLERAQKVVNALFTSTNQLGLKTDVTDYHIDQVSNLVACLSDEFCLDEKRELSEKVKHAKRLSDERNLLQDPNFRGINRQPDRGWRGSTDITIQGGDDVFKENYVTLPGTFDECYPTYLYQKIDESKLKAYTRYQLRGYIEDSQDLEIYLIRYNAKHEIVNVPGTGSLWPLSVENQIGPCGEPNRCAPHLEWNPDLHCSCRDGEKCAHHSHHFSLDIDVGCTDLNEDLGVWVIFKIKTQDGHARLGNLEFLEEKPLLGEALARVKRAEKKWRDKRETLQLETTIVYKEAKESVDALFVNSQYDRLQADTNIAMIHAADKRVHRIREAYLPELSVIPGVNAAIFEELEERIFTAFSLYDARNIIKNGDFNNGLLCWNVKGHVEVEEQNNHRSVLVIPEWEAEVSQEVRVCPGRGYILRVTAYKEGYGEGCVTIHEIENNTDELKFNNCVEEEVYPNNTVTCINYTATQEEYEGTYTSRNRGYDEAYGNNPSVPADYASVYEEKSYTDRRRENPCESNRGYGDYTPLPAGYVTKELEYFPETDKVWIEIGETEGTFIVDSVELLLMEE.

It belongs to the delta endotoxin family.

Its function is as follows. Promotes colloidosmotic lysis by binding to the midgut epithelial cells of many lepidopteran larvae. This Bacillus thuringiensis subsp. aizawai protein is Pesticidal crystal protein Cry1Da (cry1Da).